The primary structure comprises 276 residues: Phosphonoacetaldehyde hydrolase (276 aa).

The active-site Nucleophile is D19. Residues D19 and A21 each coordinate Mg(2+). K60 acts as the Schiff-base intermediate with substrate in catalysis. D193 is a Mg(2+) binding site.

Belongs to the HAD-like hydrolase superfamily. PhnX family. As to quaternary structure, homodimer. The cofactor is Mg(2+).

It carries out the reaction phosphonoacetaldehyde + H2O = acetaldehyde + phosphate + H(+). Its function is as follows. Involved in phosphonate degradation. This chain is Phosphonoacetaldehyde hydrolase, found in Bordetella bronchiseptica (strain ATCC BAA-588 / NCTC 13252 / RB50) (Alcaligenes bronchisepticus).